We begin with the raw amino-acid sequence, 41 residues long: Probable cinnamyl alcohol dehydrogenase 2 (41 aa).

Belongs to the zinc-containing alcohol dehydrogenase family. It depends on Zn(2+) as a cofactor.

It catalyses the reaction (E)-cinnamyl alcohol + NADP(+) = (E)-cinnamaldehyde + NADPH + H(+). It carries out the reaction (E)-coniferol + NADP(+) = (E)-coniferaldehyde + NADPH + H(+). The enzyme catalyses (E)-sinapyl alcohol + NADP(+) = (E)-sinapaldehyde + NADPH + H(+). The catalysed reaction is (E)-4-coumaroyl alcohol + NADP(+) = (E)-4-coumaraldehyde + NADPH + H(+). It catalyses the reaction (E)-caffeyl alcohol + NADP(+) = (E)-caffeyl aldehyde + NADPH + H(+). Its pathway is aromatic compound metabolism; phenylpropanoid biosynthesis. Functionally, involved in lignin biosynthesis. Catalyzes the final step specific for the production of lignin monomers, like coniferyl alcohol, sinapyl alcohol and 4-coumaryl alcohol. The chain is Probable cinnamyl alcohol dehydrogenase 2 from Pseudotsuga menziesii (Douglas-fir).